The sequence spans 528 residues: Importin subunit alpha-7 (528 aa).

An IBB domain is found at 1 to 56 (MKGGETMSVRRSGYKAVVDGVGGRRRREDDMVEIRKAKREESLLKKRREALPHSPS). ARM repeat units lie at residues 93–133 (NVRV…NIAS), 136–175 (SENT…NISG), 178–218 (PRCR…NLCR), 220–259 (KPQP…YLSD), 262–301 (NEKI…NIVT), 304–344 (DSQT…NITA), 347–386 (QSQI…NAIA), and 390–429 (YKQI…KILK).

Belongs to the importin alpha family. Forms a complex with importin subunit beta-1.

The protein localises to the nucleus envelope. Functionally, binds to conventional NLS motifs and mediates nuclear protein import across the nuclear envelope. Acts as a cellular receptor for the nuclear import of the virD2 protein of Agrobacterium, but is not essential for Agrobacterium-mediated root transformation. This chain is Importin subunit alpha-7, found in Arabidopsis thaliana (Mouse-ear cress).